The following is a 481-amino-acid chain: Glutamate mutase epsilon subunit (481 aa).

Arg-67 serves as a coordination point for L-glutamate. Gly-69 is a binding site for adenosylcob(III)alamin. Arg-99 serves as a coordination point for L-glutamate. An adenosylcob(III)alamin-binding site is contributed by Asn-122. Residues 148–149 (RH), Glu-170, and Tyr-176 each bind L-glutamate. Pro-179 is an adenosylcob(III)alamin binding site. Tyr-180 contacts L-glutamate. Adenosylcob(III)alamin-binding residues include Phe-296, Lys-325, Glu-329, and Ile-333.

The protein belongs to the methylaspartate mutase GlmE subunit family. In terms of assembly, heterotetramer composed of 2 epsilon subunits (GlmE) and 2 sigma subunits (GlmS). GlmE exists as a homodimer and GlmS as a monomer. The cofactor is adenosylcob(III)alamin.

The enzyme catalyses (2S,3S)-3-methyl-L-aspartate = L-glutamate. Its pathway is amino-acid degradation; L-glutamate degradation via mesaconate pathway; acetate and pyruvate from L-glutamate: step 1/4. Its function is as follows. Catalyzes the carbon skeleton rearrangement of L-glutamate to L-threo-3-methylaspartate ((2S,3S)-3-methylaspartate). The protein is Glutamate mutase epsilon subunit of Yersinia enterocolitica serotype O:8 / biotype 1B (strain NCTC 13174 / 8081).